A 424-amino-acid chain; its full sequence is Serine hydroxymethyltransferase 2 (424 aa).

(6S)-5,6,7,8-tetrahydrofolate contacts are provided by residues leucine 125 and 129 to 131 (GHL). Residue lysine 234 is modified to N6-(pyridoxal phosphate)lysine. Glutamate 250 is a binding site for (6S)-5,6,7,8-tetrahydrofolate.

The protein belongs to the SHMT family. As to quaternary structure, homodimer. The cofactor is pyridoxal 5'-phosphate.

It localises to the cytoplasm. The catalysed reaction is (6R)-5,10-methylene-5,6,7,8-tetrahydrofolate + glycine + H2O = (6S)-5,6,7,8-tetrahydrofolate + L-serine. It participates in one-carbon metabolism; tetrahydrofolate interconversion. The protein operates within amino-acid biosynthesis; glycine biosynthesis; glycine from L-serine: step 1/1. In terms of biological role, catalyzes the reversible interconversion of serine and glycine with tetrahydrofolate (THF) serving as the one-carbon carrier. This reaction serves as the major source of one-carbon groups required for the biosynthesis of purines, thymidylate, methionine, and other important biomolecules. Also exhibits THF-independent aldolase activity toward beta-hydroxyamino acids, producing glycine and aldehydes, via a retro-aldol mechanism. This chain is Serine hydroxymethyltransferase 2, found in Cupriavidus pinatubonensis (strain JMP 134 / LMG 1197) (Cupriavidus necator (strain JMP 134)).